The chain runs to 161 residues: Urocortin-3 (161 aa).

The N-terminal stretch at 1-21 is a signal peptide; it reads MLMPVHFLLLLLLLLGGPRTG. Residues 22–118 constitute a propeptide that is removed on maturation; sequence LPHKFYKAKP…QDTAKSPHRT (97 aa). A disordered region spans residues 64–118; the sequence is SRDASSGEEEEGKEKKTFPISGARGGARGTRYRYVSQAQPRGKPRQDTAKSPHRT. An Isoleucine amide modification is found at isoleucine 157.

The protein belongs to the sauvagine/corticotropin-releasing factor/urotensin I family. In terms of assembly, binds with high affinity to CRF receptors 2-alpha and 2-beta.

It localises to the secreted. Functionally, suppresses food intake, delays gastric emptying and decreases heat-induced edema. Might represent an endogenous ligand for maintaining homeostasis after stress. The chain is Urocortin-3 (UCN3) from Homo sapiens (Human).